Reading from the N-terminus, the 332-residue chain is DNA double-strand break repair nuclease NurA (332 aa).

The Mn(2+) site is built by aspartate 57 and aspartate 132.

The protein belongs to the NurA family. Requires Mn(2+) as cofactor.

Functionally, involved in DNA double-strand break (DSB) repair. Probably acts with HerA to stimulate resection of the 5' strand and produce the long 3' single-strand that is required for RadA loading. Exhibits both single-stranded endonuclease activity and 5'-3' exonuclease activity on single-stranded and double-stranded DNA. The protein is DNA double-strand break repair nuclease NurA of Sulfolobus acidocaldarius (strain ATCC 33909 / DSM 639 / JCM 8929 / NBRC 15157 / NCIMB 11770).